Reading from the N-terminus, the 507-residue chain is Acetylcholine receptor subunit beta-type lev-1 (507 aa).

The first 31 residues, 1-31 (MMLGGGGGCGAGGTWLGFLVFLAVSLRNHST), serve as a signal peptide directing secretion. Residues Asn28, Asn58, and Asn109 are each glycosylated (N-linked (GlcNAc...) asparagine). Residues 32–138 (CEDIDAEDRL…NNADGNYEVS (107 aa)) are Extracellular-facing. Residues 139 to 159 (FMCNVLILSTGTVLWVPPAIY) form a helical membrane-spanning segment. Cys163 and Cys177 are oxidised to a cystine. 3 helical membrane passes run 243 to 263 (VVLI…FYLP), 271 to 291 (GLTM…SKIL), and 305 to 325 (LLLT…ICNI). Residues 373–392 (GPSVEENPMRSGEHHPLCRH) form a disordered region. Positions 379-392 (NPMRSGEHHPLCRH) are enriched in basic and acidic residues. The chain crosses the membrane as a helical span at residues 454 to 474 (FLLYGFFGATVGGTIGIIFTA).

It belongs to the ligand-gated ion channel (TC 1.A.9) family. Acetylcholine receptor (TC 1.A.9.1) subfamily. In terms of assembly, interacts with unc-29. Component of nicotinic acetylcholine receptor composed of 2 non-alpha subunits lev-1 and unc-29, and 3 alpha subunits unc-38, unc-63 and lev-8.

The protein resides in the postsynaptic cell membrane. It is found in the cell membrane. Non-alpha subunit of nicotinic acetylcholine receptor (nAChR). Involved in nAChR sensitivity to nicotine. The protein is Acetylcholine receptor subunit beta-type lev-1 (lev-1) of Caenorhabditis elegans.